The chain runs to 391 residues: GTPase HflX (391 aa).

The segment at 162 to 181 is disordered; that stretch reads LAQQRGGAKGTRGASRGAGE. A Hflx-type G domain is found at 222–391; the sequence is KIGAIVGYTN…KITDIIIFDK (170 aa). GTP-binding positions include 228-235, 253-257, 278-281, 344-347, and 369-371; these read GYTNAGKS, FATLD, DTVG, NKMD, and SVT. Serine 235 and threonine 255 together coordinate Mg(2+).

The protein belongs to the TRAFAC class OBG-HflX-like GTPase superfamily. HflX GTPase family. Monomer. Associates with the 50S ribosomal subunit. Mg(2+) serves as cofactor.

The protein localises to the cytoplasm. Functionally, GTPase that associates with the 50S ribosomal subunit and may have a role during protein synthesis or ribosome biogenesis. The sequence is that of GTPase HflX from Treponema denticola (strain ATCC 35405 / DSM 14222 / CIP 103919 / JCM 8153 / KCTC 15104).